Consider the following 689-residue polypeptide: Glycine--tRNA ligase beta subunit (689 aa).

This sequence belongs to the class-II aminoacyl-tRNA synthetase family. In terms of assembly, tetramer of two alpha and two beta subunits.

The protein resides in the cytoplasm. It carries out the reaction tRNA(Gly) + glycine + ATP = glycyl-tRNA(Gly) + AMP + diphosphate. The polypeptide is Glycine--tRNA ligase beta subunit (Dichelobacter nodosus (strain VCS1703A)).